Reading from the N-terminus, the 261-residue chain is MTGMESPRDIRARIARSQWTKPTTGLAPAYAQANVVILDRRYAFDFLLFCVRNSKPCPILEVLEPGVTEPHATAPGADIRTDVPLYRVWRKGRLEQEATDITGCFDAGMVSFLLGCSFTFEASLTGAGVPVRNIEEGKNVSMYVTNRKCASAGPFSAPLVVTMRPIPNDLVMRAVRITSRYSLAHGAPIQVGDPGALGIRDLDRPDFGDPVTVKDGETPVFWACGVTSSLAVLSAEPELCITHAPGHMFITDVLNETLAAL.

Belongs to the D-glutamate cyclase family.

The chain is Putative hydro-lyase Sfum_3393 from Syntrophobacter fumaroxidans (strain DSM 10017 / MPOB).